A 457-amino-acid chain; its full sequence is Multidrug resistance protein MdtK (457 aa).

The next 12 membrane-spanning stretches (helical) occupy residues leucine 11–valine 31, alanine 46–leucine 66, tryptophan 93–isoleucine 113, alanine 127–leucine 147, glycine 160–tyrosine 180, leucine 188–methionine 208, leucine 243–valine 263, leucine 283–phenylalanine 301, tyrosine 316–phenylalanine 336, leucine 357–valine 377, isoleucine 387–glycine 407, and proline 418–leucine 438.

It belongs to the multi antimicrobial extrusion (MATE) (TC 2.A.66.1) family. MdtK subfamily.

Its subcellular location is the cell inner membrane. Functionally, multidrug efflux pump that functions probably as a Na(+)/drug antiporter. This Yersinia pseudotuberculosis serotype O:1b (strain IP 31758) protein is Multidrug resistance protein MdtK.